Consider the following 76-residue polypeptide: Putative Fe(2+) transport protein A (76 aa).

Belongs to the FeoA family.

Might be involved in Fe(2+) ion uptake. The protein is Putative Fe(2+) transport protein A of Helicobacter pylori (strain ATCC 700392 / 26695) (Campylobacter pylori).